Here is a 793-residue protein sequence, read N- to C-terminus: Kinesin-associated protein 3 (793 aa).

Phosphoserine is present on Ser-60. Basic and acidic residues predominate over residues 103–119 (LPGKEKKEKSSKPKDPP). Residues 103-123 (LPGKEKKEKSSKPKDPPPFEG) are disordered. ARM repeat units follow at residues 333–373 (FMEN…NLSF), 374–412 (DTGLRNKMVQVGLLPKLTALLGNENYKQIAMCVLYHISM), 494–533 (DGPTKNLFIDYVGDLAAQISSDEEEEFVIECLGTLANLTI), 578–620 (DDSC…QMVF), and 621–662 (HQAT…IIAE).

Interacts with SMC3 subunit of the cohesin complex. Heterotrimer of KIFAP3, KIF3A and KIF3B. Interacts with RAP1GDS1/SMG GDS. In terms of processing, phosphorylated on tyrosine residues by SRC in vitro; this reduces the binding affinity of the protein for RAP1GDS1.

Its function is as follows. Involved in tethering the chromosomes to the spindle pole and in chromosome movement. Binds to the tail domain of the KIF3A/KIF3B heterodimer to form a heterotrimeric KIF3 complex and may regulate the membrane binding of this complex. The chain is Kinesin-associated protein 3 (Kifap3) from Mus musculus (Mouse).